The chain runs to 126 residues: uncharacterized protein (126 aa).

The first 27 residues, 1 to 27, serve as a signal peptide directing secretion; that stretch reads MKNLFIFLSLMMMFVLTACGGSKYDDA. Residues 93-126 form a disordered region; sequence MTDMPGNGENDRLGLSKKTPDYEEVKGEETELEE. Residues 101–126 show a composition bias toward basic and acidic residues; sequence ENDRLGLSKKTPDYEEVKGEETELEE.

This is an uncharacterized protein from Bacillus subtilis (strain 168).